Consider the following 1411-residue polypeptide: ATP-dependent permease PDR11 (1411 aa).

Residues 2–388 lie on the Cytoplasmic side of the membrane; it reads SLSKYFNPIP…IGDRNYLISQ (387 aa). Residues 31–273 form the ABC transporter 1 domain; sequence VQNDEESASE…FHDTLQIKKN (243 aa). The chain crosses the membrane as a helical span at residues 389–409; the sequence is FVSVVVQSLVIGSLFYNIPLT. The Extracellular segment spans residues 410–418; the sequence is TIGSFSRGS. The helical transmembrane segment at 419–439 threads the bilayer; the sequence is LTFFSILFFTFLSLADMPASF. Topologically, residues 440–471 are cytoplasmic; it reads QRQPVVRKHVQLHFYYNWVETLATNFFDCCSK. A helical membrane pass occupies residues 472-492; that stretch reads FILVVIFTIILYFLAHLQYNA. Residues 493 to 494 lie on the Extracellular side of the membrane; it reads AR. The helical transmembrane segment at 495-515 threads the bilayer; the sequence is FFIFLLFLSVYNFCMVSLFAL. The Cytoplasmic portion of the chain corresponds to 516-524; it reads TALIAPTLS. A helical membrane pass occupies residues 525 to 545; that stretch reads MANLLAGILLLAIAMYASYVI. Residues 546 to 636 lie on the Extracellular side of the membrane; the sequence is YMKDMHPWFI…YTYHHVWRNF (91 aa). Asn-595 is a glycosylation site (N-linked (GlcNAc...) asparagine). The helical transmembrane segment at 637–657 threads the bilayer; sequence GIIIGFLCFFLFCSLLAAEYI. The Cytoplasmic portion of the chain corresponds to 658–1090; sequence TPLFTRENLL…QYICTKRDMT (433 aa). In terms of domain architecture, ABC transporter 2 spans 751–979; it reads ISWKNINYTI…FVAHDRRLTF (229 aa). ATP is bound at residue 782–789; sequence GESGAGKT. Residues 1091–1111 traverse the membrane as a helical segment; sequence YVFAKYALNAGAGLFIGFSFW. At 1112–1117 the chain is on the extracellular side; the sequence is RTKHNI. The chain crosses the membrane as a helical span at residues 1118–1138; that stretch reads NGLQDAIFLCFMMLCVSSPLI. Residues 1139 to 1175 are Cytoplasmic-facing; it reads NQVQDKALQSKEVYIAREARSNTYHWTVLLIAQTIVE. A helical transmembrane segment spans residues 1176-1196; the sequence is LPLAISSSTLFFLCCYFCCGF. Residues 1197-1204 are Extracellular-facing; that stretch reads ETSARVAG. Residues 1205 to 1225 traverse the membrane as a helical segment; sequence VFYLNYILFSMYYLSFGLWLL. The Cytoplasmic portion of the chain corresponds to 1226–1230; it reads YSAPD. The chain crosses the membrane as a helical span at residues 1231-1251; sequence LQTAAVFVAFLYSFTASFCGV. Residues 1252 to 1355 lie on the Extracellular side of the membrane; that stretch reads MQPYSLFPRF…NMSYHHRWRN (104 aa). Residues Asn-1289, Asn-1324, and Asn-1346 are each glycosylated (N-linked (GlcNAc...) asparagine). A helical transmembrane segment spans residues 1356-1376; the sequence is FGFEWVFVCFNIAAMFVGFYL. Residues 1377–1411 are Cytoplasmic-facing; it reads TYIKKIWPSVIDGIKKCIPSMRRSKTSHNPNEQSV.

Belongs to the ABC transporter superfamily. ABCG family. PDR (TC 3.A.1.205) subfamily.

The protein localises to the membrane. Transporter involved in the uptake of sterol. This is ATP-dependent permease PDR11 (PDR11) from Saccharomyces cerevisiae (strain ATCC 204508 / S288c) (Baker's yeast).